Reading from the N-terminus, the 196-residue chain is Probable thymidylate kinase (196 aa).

Residue 7–14 (GIDGAGKT) coordinates ATP.

This sequence belongs to the thymidylate kinase family.

It carries out the reaction dTMP + ATP = dTDP + ADP. In Archaeoglobus fulgidus (strain ATCC 49558 / DSM 4304 / JCM 9628 / NBRC 100126 / VC-16), this protein is Probable thymidylate kinase (tmk).